The chain runs to 150 residues: Transcriptional repressor NrdR (150 aa).

The segment at 3–34 is a zinc-finger region; that stretch reads CPFCNFEESKVVDSRATDDNTTIRRRRECLNC. Residues 49 to 139 form the ATP-cone domain; it reads VLVVKKDLAR…VYRQFKDINT (91 aa).

This sequence belongs to the NrdR family. The cofactor is Zn(2+).

Functionally, negatively regulates transcription of bacterial ribonucleotide reductase nrd genes and operons by binding to NrdR-boxes. The protein is Transcriptional repressor NrdR of Clostridium botulinum (strain Eklund 17B / Type B).